A 326-amino-acid chain; its full sequence is Adenosine receptor A1 (326 aa).

Over 1–10 (MPHSVSAFQA) the chain is Extracellular. A helical transmembrane segment spans residues 11–33 (AYIGIEVLIALVSVPGNVLVIWA). Topologically, residues 34 to 46 (VKVNQALRDATFC) are cytoplasmic. Residues 47–69 (FIASLAVADVAVGALVIPLAILI) traverse the membrane as a helical segment. Topologically, residues 70 to 80 (NIGPQTYFHTC) are extracellular. The cysteines at positions 80 and 169 are disulfide-linked. A helical transmembrane segment spans residues 81–102 (LMVACPVLILTQSSILALLAIA). Over 103–123 (VDRYLRVKIPLRYKTVVTPRR) the chain is Cytoplasmic. A helical transmembrane segment spans residues 124 to 146 (AAVAIAGCWILSLVVGLTPMFGW). The Extracellular segment spans residues 147–176 (NNLSKIEMAWAANGSVGEPVIKCEFEKVIS). N-linked (GlcNAc...) asparagine glycosylation occurs at asparagine 159. The helical transmembrane segment at 177–201 (MEYMVYFNFFVWVLPPLLLMVLIYL) threads the bilayer. The Cytoplasmic portion of the chain corresponds to 202–235 (EVFYLIRKQLSKKVSASSGDPQKYYGKELKIAKS). A helical transmembrane segment spans residues 236–259 (LALILFLFALSWLPLHILNCITLF). Residues 260-267 (CPTCHKPT) are Extracellular-facing. The helical transmembrane segment at 268-292 (ILTYIAIFLTHGNSAMNPIVYAFRI) threads the bilayer. Residues 293 to 326 (QKFRVTFLKIWNDHFRCQPEPPIDEDLPEEKVDD) are Cytoplasmic-facing. The S-palmitoyl cysteine moiety is linked to residue cysteine 309.

This sequence belongs to the G-protein coupled receptor 1 family.

The protein localises to the cell membrane. Its function is as follows. Receptor for adenosine. The activity of this receptor is mediated by G proteins which inhibit adenylyl cyclase. The chain is Adenosine receptor A1 (ADORA1) from Cavia porcellus (Guinea pig).